Here is a 607-residue protein sequence, read N- to C-terminus: Sulfite reductase [NADPH] flavoprotein alpha-component (607 aa).

The 139-residue stretch at 66–204 (VTILYGSQTG…AAGQWHADVL (139 aa)) folds into the Flavodoxin-like domain. FMN contacts are provided by residues 72–77 (SQTGNG), 119–122 (STHG), and 155–164 (LGDSSYEFFC). The FAD-binding FR-type domain maps to 239–456 (QNPYRAEVLV…VEPNKHFRLP (218 aa)). FAD contacts are provided by residues Thr327, Leu361, 395–398 (RLYS), 413–415 (TVA), and 428–431 (GGAS). NADP(+)-binding positions include 527–528 (SR), 533–537 (KIYVQ), and Asp569. Residue Tyr607 coordinates FAD.

This sequence belongs to the NADPH-dependent sulphite reductase flavoprotein subunit CysJ family. The protein in the N-terminal section; belongs to the flavodoxin family. It in the C-terminal section; belongs to the flavoprotein pyridine nucleotide cytochrome reductase family. In terms of assembly, alpha(8)-beta(8). The alpha component is a flavoprotein, the beta component is a hemoprotein. FAD serves as cofactor. FMN is required as a cofactor.

The catalysed reaction is hydrogen sulfide + 3 NADP(+) + 3 H2O = sulfite + 3 NADPH + 4 H(+). It functions in the pathway sulfur metabolism; hydrogen sulfide biosynthesis; hydrogen sulfide from sulfite (NADPH route): step 1/1. Its function is as follows. Component of the sulfite reductase complex that catalyzes the 6-electron reduction of sulfite to sulfide. This is one of several activities required for the biosynthesis of L-cysteine from sulfate. The flavoprotein component catalyzes the electron flow from NADPH -&gt; FAD -&gt; FMN to the hemoprotein component. This Shewanella oneidensis (strain ATCC 700550 / JCM 31522 / CIP 106686 / LMG 19005 / NCIMB 14063 / MR-1) protein is Sulfite reductase [NADPH] flavoprotein alpha-component.